The following is a 66-amino-acid chain: Large ribosomal subunit protein bL35 (66 aa).

2 stretches are compositionally biased toward basic residues: residues 1 to 15 (MPKL…KRFK) and 24 to 40 (HAQR…TKKQ). A disordered region spans residues 1–40 (MPKLKTKSGAKKRFKVTGTGKVMHAQRGKRHGMIKRTKKQ).

This sequence belongs to the bacterial ribosomal protein bL35 family.

The sequence is that of Large ribosomal subunit protein bL35 from Bradyrhizobium sp. (strain ORS 278).